We begin with the raw amino-acid sequence, 253 residues long: Ubiquinone/menaquinone biosynthesis C-methyltransferase UbiE (253 aa).

Residues T76, D97, and 125-126 each bind S-adenosyl-L-methionine; that span reads NA.

This sequence belongs to the class I-like SAM-binding methyltransferase superfamily. MenG/UbiE family.

It carries out the reaction a 2-demethylmenaquinol + S-adenosyl-L-methionine = a menaquinol + S-adenosyl-L-homocysteine + H(+). The catalysed reaction is a 2-methoxy-6-(all-trans-polyprenyl)benzene-1,4-diol + S-adenosyl-L-methionine = a 5-methoxy-2-methyl-3-(all-trans-polyprenyl)benzene-1,4-diol + S-adenosyl-L-homocysteine + H(+). The protein operates within quinol/quinone metabolism; menaquinone biosynthesis; menaquinol from 1,4-dihydroxy-2-naphthoate: step 2/2. It participates in cofactor biosynthesis; ubiquinone biosynthesis. Methyltransferase required for the conversion of demethylmenaquinol (DMKH2) to menaquinol (MKH2) and the conversion of 2-polyprenyl-6-methoxy-1,4-benzoquinol (DDMQH2) to 2-polyprenyl-3-methyl-6-methoxy-1,4-benzoquinol (DMQH2). The protein is Ubiquinone/menaquinone biosynthesis C-methyltransferase UbiE of Rhodopseudomonas palustris (strain BisB5).